The sequence spans 220 residues: Riboflavin kinase (220 aa).

An H-T-H motif-like region spans residues 1-92 (MDTSDQYYRA…LSRILSIKSN (92 aa)). Residues 93 to 220 (IVMTGIVVPG…GDEVTIEVTA (128 aa)) form a riboflavin kinase region. 102 to 107 (GMGEGK) provides a ligand contact to CDP. Residues T131 and N133 each coordinate Mg(2+). Residues T188 and E195 each coordinate FMN. 200–203 (KYLR) contributes to the CDP binding site.

It belongs to the archaeal riboflavin kinase family. Requires Mg(2+) as cofactor.

It carries out the reaction riboflavin + CTP = CDP + FMN + H(+). The protein operates within cofactor biosynthesis; FMN biosynthesis; FMN from riboflavin (CTP route): step 1/1. Its function is as follows. Catalyzes the CTP-dependent phosphorylation of riboflavin (vitamin B2) to form flavin mononucleotide (FMN). This is Riboflavin kinase (ribK) from Thermoplasma volcanium (strain ATCC 51530 / DSM 4299 / JCM 9571 / NBRC 15438 / GSS1).